The sequence spans 257 residues: Na(+)-translocating NADH-quinone reductase subunit C (257 aa).

The helical transmembrane segment at 13-33 (LTVVVLLSLICSLIVASAAVL) threads the bilayer. Thr-224 carries the FMN phosphoryl threonine modification.

This sequence belongs to the NqrC family. Composed of six subunits; NqrA, NqrB, NqrC, NqrD, NqrE and NqrF. FMN is required as a cofactor.

Its subcellular location is the cell inner membrane. The enzyme catalyses a ubiquinone + n Na(+)(in) + NADH + H(+) = a ubiquinol + n Na(+)(out) + NAD(+). In terms of biological role, NQR complex catalyzes the reduction of ubiquinone-1 to ubiquinol by two successive reactions, coupled with the transport of Na(+) ions from the cytoplasm to the periplasm. NqrA to NqrE are probably involved in the second step, the conversion of ubisemiquinone to ubiquinol. The chain is Na(+)-translocating NADH-quinone reductase subunit C from Haemophilus ducreyi (strain 35000HP / ATCC 700724).